A 397-amino-acid polypeptide reads, in one-letter code: Riboflavin biosynthesis protein RibBA (397 aa).

Residues 1–199 (MFHRIEEALE…IEDLIAYRRH (199 aa)) form a DHBP synthase region. D-ribulose 5-phosphate-binding positions include 26–27 (RE), D31, 138–142 (RAGHT), and E162. Residue E27 participates in Mg(2+) binding. H141 serves as a coordination point for Mg(2+). The tract at residues 200–397 (HETLVTREAE…VNKLGHLLNL (198 aa)) is GTP cyclohydrolase II. 250-254 (RVHSE) is a binding site for GTP. The Zn(2+) site is built by C255, C266, and C268. GTP is bound by residues Q271, 293–295 (EGR), and T315. D327 serves as the catalytic Proton acceptor; for GTP cyclohydrolase activity. Residue R329 is the Nucleophile; for GTP cyclohydrolase activity of the active site. 2 residues coordinate GTP: T350 and K355.

In the N-terminal section; belongs to the DHBP synthase family. This sequence in the C-terminal section; belongs to the GTP cyclohydrolase II family. Mg(2+) is required as a cofactor. It depends on Mn(2+) as a cofactor. The cofactor is Zn(2+).

It catalyses the reaction D-ribulose 5-phosphate = (2S)-2-hydroxy-3-oxobutyl phosphate + formate + H(+). It carries out the reaction GTP + 4 H2O = 2,5-diamino-6-hydroxy-4-(5-phosphoribosylamino)-pyrimidine + formate + 2 phosphate + 3 H(+). It functions in the pathway cofactor biosynthesis; riboflavin biosynthesis; 2-hydroxy-3-oxobutyl phosphate from D-ribulose 5-phosphate: step 1/1. Its pathway is cofactor biosynthesis; riboflavin biosynthesis; 5-amino-6-(D-ribitylamino)uracil from GTP: step 1/4. In terms of biological role, catalyzes the conversion of D-ribulose 5-phosphate to formate and 3,4-dihydroxy-2-butanone 4-phosphate. Functionally, catalyzes the conversion of GTP to 2,5-diamino-6-ribosylamino-4(3H)-pyrimidinone 5'-phosphate (DARP), formate and pyrophosphate. The polypeptide is Riboflavin biosynthesis protein RibBA (Bacillus cereus (strain ATCC 14579 / DSM 31 / CCUG 7414 / JCM 2152 / NBRC 15305 / NCIMB 9373 / NCTC 2599 / NRRL B-3711)).